Consider the following 204-residue polypeptide: Probable nicotinate-nucleotide adenylyltransferase (204 aa).

This sequence belongs to the NadD family.

The enzyme catalyses nicotinate beta-D-ribonucleotide + ATP + H(+) = deamido-NAD(+) + diphosphate. The protein operates within cofactor biosynthesis; NAD(+) biosynthesis; deamido-NAD(+) from nicotinate D-ribonucleotide: step 1/1. Catalyzes the reversible adenylation of nicotinate mononucleotide (NaMN) to nicotinic acid adenine dinucleotide (NaAD). The polypeptide is Probable nicotinate-nucleotide adenylyltransferase (Dehalococcoides mccartyi (strain ATCC BAA-2266 / KCTC 15142 / 195) (Dehalococcoides ethenogenes (strain 195))).